A 226-amino-acid polypeptide reads, in one-letter code: MKFKAIVIDIDGTITCENRELHLGAVKKIRILKVPVVLATGNILCYARTASKLIGLDGAVIAENGGAVTVRYDLNGTFEESLEECEKAFSFLSEYFKLTKLDPFYRKTEIALRRDFNLEKARTLLETQPFDVEMVDTKYAVHIKSTRINKGSGLRKLAEIMGLEAEDFVAIGDSENDIEMFEAAGFGIAVANGDERIKEAANYVTEASYGDGAVEAIEFLESNGWI.

Aspartate 9 serves as the catalytic Nucleophile. Residues aspartate 9 and aspartate 11 each contribute to the Mg(2+) site. Lysine 150 lines the substrate pocket. Residues aspartate 173 and aspartate 177 each coordinate Mg(2+).

It belongs to the archaeal SPP-like hydrolase family. Requires Mg(2+) as cofactor.

It carries out the reaction 2-phosphoglycolate + H2O = glycolate + phosphate. Its function is as follows. Catalyzes the dephosphorylation of 2-phosphoglycolate. This is Phosphoglycolate phosphatase from Methanosarcina acetivorans (strain ATCC 35395 / DSM 2834 / JCM 12185 / C2A).